A 395-amino-acid polypeptide reads, in one-letter code: Ribosomal RNA large subunit methyltransferase G (395 aa).

This sequence belongs to the methyltransferase superfamily. RlmG family.

The protein localises to the cytoplasm. It catalyses the reaction guanosine(1835) in 23S rRNA + S-adenosyl-L-methionine = N(2)-methylguanosine(1835) in 23S rRNA + S-adenosyl-L-homocysteine + H(+). In terms of biological role, specifically methylates the guanine in position 1835 (m2G1835) of 23S rRNA. This is Ribosomal RNA large subunit methyltransferase G from Yersinia pseudotuberculosis serotype O:1b (strain IP 31758).